Reading from the N-terminus, the 274-residue chain is Putative deoxyribonuclease TATDN1 homolog (274 aa).

Residues glutamate 105, histidine 139, histidine 162, and aspartate 208 each coordinate a divalent metal cation.

The protein belongs to the metallo-dependent hydrolases superfamily. TatD-type hydrolase family. The cofactor is a divalent metal cation.

The protein localises to the nucleus. Its function is as follows. Putative deoxyribonuclease. The chain is Putative deoxyribonuclease TATDN1 homolog from Enterocytozoon bieneusi (strain H348) (Microsporidian parasite).